We begin with the raw amino-acid sequence, 334 residues long: Phosphatidylglycerol--prolipoprotein diacylglyceryl transferase (334 aa).

Transmembrane regions (helical) follow at residues 22-42 (FLPF…VVAA), 54-74 (AEPG…IIGA), 105-125 (IWEG…GVGI), and 131-151 (GLRF…AQAI). R153 contacts a 1,2-diacyl-sn-glycero-3-phospho-(1'-sn-glycerol). Helical transmembrane passes span 191 to 211 (LFQP…FVIL) and 251 to 271 (FLGI…GAII). A disordered region spans residues 296-334 (PQAEVESGETDPEEILHADDDEERTGTHKPQATSLSGSN). Residues 301–318 (ESGETDPEEILHADDDEE) show a composition bias toward acidic residues. The span at 323 to 334 (HKPQATSLSGSN) shows a compositional bias: polar residues.

Belongs to the Lgt family.

The protein resides in the cell membrane. It carries out the reaction L-cysteinyl-[prolipoprotein] + a 1,2-diacyl-sn-glycero-3-phospho-(1'-sn-glycerol) = an S-1,2-diacyl-sn-glyceryl-L-cysteinyl-[prolipoprotein] + sn-glycerol 1-phosphate + H(+). It participates in protein modification; lipoprotein biosynthesis (diacylglyceryl transfer). In terms of biological role, catalyzes the transfer of the diacylglyceryl group from phosphatidylglycerol to the sulfhydryl group of the N-terminal cysteine of a prolipoprotein, the first step in the formation of mature lipoproteins. This is Phosphatidylglycerol--prolipoprotein diacylglyceryl transferase from Leifsonia xyli subsp. xyli (strain CTCB07).